Here is a 359-residue protein sequence, read N- to C-terminus: Phosphate acyltransferase (359 aa).

This sequence belongs to the PlsX family. Homodimer. Probably interacts with PlsY.

The protein localises to the cytoplasm. The enzyme catalyses a fatty acyl-[ACP] + phosphate = an acyl phosphate + holo-[ACP]. It participates in lipid metabolism; phospholipid metabolism. Functionally, catalyzes the reversible formation of acyl-phosphate (acyl-PO(4)) from acyl-[acyl-carrier-protein] (acyl-ACP). This enzyme utilizes acyl-ACP as fatty acyl donor, but not acyl-CoA. This Salmonella agona (strain SL483) protein is Phosphate acyltransferase.